A 163-amino-acid chain; its full sequence is Gas vesicle protein H2 (163 aa).

A disordered region spans residues 57 to 92 (LGSDARSPSTPAGNADDAGDAETAHIETRASDDSDD). The span at 78-88 (ETAHIETRASD) shows a compositional bias: basic and acidic residues.

The protein belongs to the gas vesicle GvpH family. In terms of assembly, gvpF to GvpM interact with each other in vitro, and may form multi-subunit complex(es). Interacts with GvpC. Might interact with GvpA.

It localises to the gas vesicle. The protein localises to the cytoplasm. Functionally, a minor component of the gas vesicle, also found in soluble extracts. Proteins GvpF to GvpM might be involved in nucleating gas vesicle formation. Gas vesicles are hollow, gas filled proteinaceous nanostructures found in several microbial planktonic microorganisms. They allow positioning of halobacteria at the optimal depth for growth in the poorly aerated, shallow brine pools of their habitat. In terms of biological role, expression of 2 c-vac DNA fragments containing 2 divergently transcribed regions (gvpE-gvpF-gvpG-gvpH-gvpI-gvpJ-gvpK-gvpL-gvpM and gvpA-gvpC-gvpN-gvpO) allows H.volcanii to produce gas vesicles. This chain is Gas vesicle protein H2, found in Halobacterium salinarum (strain ATCC 700922 / JCM 11081 / NRC-1) (Halobacterium halobium).